We begin with the raw amino-acid sequence, 286 residues long: Probable protein S-acyltransferase 16 (286 aa).

Helical transmembrane passes span 11–31 (PVTVVMLVIGFIYFASVFTFI) and 45–65 (NAAAFTALALMCIYNYSIAVF). Residues 97-147 (RYCQKCSHFKPPRAHHCRVCKRCVLRMDHHCIWINNCVGHTNYKVFFVFVV) form the DHHC domain. Cys-127 (S-palmitoyl cysteine intermediate) is an active-site residue. Transmembrane regions (helical) follow at residues 141–161 (VFFVFVVYAVTACVYSLVLLV) and 182–202 (IYVISAFLLIPLSIALGVLLG).

It belongs to the DHHC palmitoyltransferase family.

It is found in the golgi apparatus membrane. It catalyses the reaction L-cysteinyl-[protein] + hexadecanoyl-CoA = S-hexadecanoyl-L-cysteinyl-[protein] + CoA. Palmitoyl acyltransferase. The sequence is that of Probable protein S-acyltransferase 16 (PAT16) from Arabidopsis thaliana (Mouse-ear cress).